Here is a 43-residue protein sequence, read N- to C-terminus: Protein PsbN (43 aa).

Residues 5-27 (TLVAIFISCLLVSFTGYAPYTAS) traverse the membrane as a helical segment.

The protein belongs to the PsbN family.

Its subcellular location is the plastid. The protein resides in the chloroplast thylakoid membrane. Functionally, may play a role in photosystem I and II biogenesis. This is Protein PsbN from Anthoceros angustus (Hornwort).